We begin with the raw amino-acid sequence, 277 residues long: MEYQHWLREAISQLQASESPRRDAEILLEHVTGKGRTFILAFGETQLTDEQCQQLDALLTRRRDGEPIAHLTGVREFWSLPLFVSPATLIPRPDTECLVEQALARLPEQPCRILDLGTGTGAIALALARERPDCEITAVDRMPDAVALAQRNAQHLAIKNIHILQSDWFSELAGQQFAMIVSNPPYIDEQDPHLQQGDVRFEPLTALVAADSGMADIVHIIEQSRNALVSGGFLLLEHGWQQGEAVRQAFILAGYHDVETCRDYGDNERVTLGRYYQ.

S-adenosyl-L-methionine is bound by residues 117-121 (GTGTG), aspartate 140, tryptophan 168, and asparagine 183. 183–186 (NPPY) contributes to the substrate binding site.

Belongs to the protein N5-glutamine methyltransferase family. PrmC subfamily.

The enzyme catalyses L-glutaminyl-[peptide chain release factor] + S-adenosyl-L-methionine = N(5)-methyl-L-glutaminyl-[peptide chain release factor] + S-adenosyl-L-homocysteine + H(+). Its function is as follows. Methylates the class 1 translation termination release factors RF1/PrfA and RF2/PrfB on the glutamine residue of the universally conserved GGQ motif. This chain is Release factor glutamine methyltransferase, found in Shigella dysenteriae serotype 1 (strain Sd197).